Consider the following 444-residue polypeptide: Phosphoglucosamine mutase (444 aa).

The active-site Phosphoserine intermediate is Ser101. The Mg(2+) site is built by Ser101, Asp239, Asp241, and Asp243. The residue at position 101 (Ser101) is a Phosphoserine.

This sequence belongs to the phosphohexose mutase family. Mg(2+) is required as a cofactor. Activated by phosphorylation.

The catalysed reaction is alpha-D-glucosamine 1-phosphate = D-glucosamine 6-phosphate. Functionally, catalyzes the conversion of glucosamine-6-phosphate to glucosamine-1-phosphate. This chain is Phosphoglucosamine mutase, found in Alcanivorax borkumensis (strain ATCC 700651 / DSM 11573 / NCIMB 13689 / SK2).